Here is a 245-residue protein sequence, read N- to C-terminus: Thiopurine S-methyltransferase (245 aa).

Position 14 is a phosphoserine (Ser-14). S-adenosyl-L-methionine is bound at residue 29-40 (WQDKWVNGKTAF). Phe-40 serves as a coordination point for substrate. The residue at position 58 (Lys-58) is an N6-acetyllysine. S-adenosyl-L-methionine is bound by residues Leu-69, Glu-90, 134–135 (SI), and Arg-152.

This sequence belongs to the class I-like SAM-binding methyltransferase superfamily. TPMT family. As to quaternary structure, monomer.

Its subcellular location is the cytoplasm. The enzyme catalyses S-adenosyl-L-methionine + a thiopurine = S-adenosyl-L-homocysteine + a thiopurine S-methylether.. It carries out the reaction mercaptopurine + S-adenosyl-L-methionine = 6-methylthiopurine + S-adenosyl-L-homocysteine + H(+). The catalysed reaction is 6-thioguanine + S-adenosyl-L-methionine = 6-methylthioguanine + S-adenosyl-L-homocysteine + H(+). Its activity is regulated as follows. Inhibited by S-adenosyl-L-homocysteine (SAH). Functionally, catalyzes the S-methylation of thiopurine drugs such as 6-mercaptopurine (also called mercaptopurine, 6-MP or its brand name Purinethol) and 6-thioguanine (also called tioguanine or 6-TG) using S-adenosyl-L-methionine as the methyl donor. TPMT activity modulates the cytotoxic effects of thiopurine prodrugs. A natural substrate for this enzyme has yet to be identified. The polypeptide is Thiopurine S-methyltransferase (TPMT) (Homo sapiens (Human)).